The chain runs to 364 residues: Guanine nucleotide-binding protein alpha-8 subunit (364 aa).

Residue Gly2 is the site of N-myristoyl glycine attachment. The S-palmitoyl cysteine moiety is linked to residue Cys5. In terms of domain architecture, G-alpha spans 38–364 (KILKLLILGP…QHTMQKVGIQ (327 aa)). The segment at 41 to 54 (KLLILGPGESGKST) is G1 motif. Residues 46–53 (GPGESGKS), 186–192 (LKSRVPT), 211–215 (DVGGQ), 280–283 (NKID), and Ala336 contribute to the GTP site. Positions 53 and 192 each coordinate Mg(2+). The tract at residues 184-192 (DILKSRVPT) is G2 motif. Residues 207–216 (FKIFDVGGQR) are G3 motif. Positions 276-283 (ILFLNKID) are G4 motif. The segment at 334–339 (TCATDT) is G5 motif.

It belongs to the G-alpha family. As to quaternary structure, g proteins are composed of 3 units; alpha, beta and gamma. The alpha chain contains the guanine nucleotide binding site.

Guanine nucleotide-binding proteins (G proteins) are involved as modulators or transducers in various transmembrane signaling systems. In Caenorhabditis briggsae, this protein is Guanine nucleotide-binding protein alpha-8 subunit (gpa-8).